Here is a 142-residue protein sequence, read N- to C-terminus: Hemoglobin subunit alpha (142 aa).

Ser1 carries the N-acetylserine modification. The Globin domain occupies 1 to 142; that stretch reads SLSDKDKAAV…VALALAERYR (142 aa). His59 lines the O2 pocket. His88 provides a ligand contact to heme b.

The protein belongs to the globin family. In terms of assembly, hb1 is a heterotetramer of two alpha chains and two beta chains. HbC is a heterotetramer of two alpha chains and two beta-C chains. Red blood cells.

Its function is as follows. Involved in oxygen transport from gills to the various peripheral tissues. This is Hemoglobin subunit alpha (hba) from Trematomus bernacchii (Emerald rockcod).